Consider the following 129-residue polypeptide: Ferredoxin-1 (129 aa).

Residues 29-120 (SDMDLDDEDY…EVKIVYNAKH (92 aa)) form the 2Fe-2S ferredoxin-type domain. [2Fe-2S] cluster contacts are provided by Cys64, Cys69, Cys72, and Cys103.

It belongs to the 2Fe2S plant-type ferredoxin family. [2Fe-2S] cluster is required as a cofactor.

Functionally, ferredoxins are iron-sulfur proteins that transfer electrons in a wide variety of metabolic reactions. This Haloarcula marismortui (strain ATCC 43049 / DSM 3752 / JCM 8966 / VKM B-1809) (Halobacterium marismortui) protein is Ferredoxin-1 (fer1).